A 468-amino-acid polypeptide reads, in one-letter code: Zinc finger protein 672 (468 aa).

C2H2-type zinc fingers lie at residues Tyr-15–His-37, Phe-43–His-65, Tyr-71–His-93, and Arg-100–His-123. The C2H2-type 5; degenerate zinc-finger motif lies at His-129 to His-151. 9 consecutive C2H2-type zinc fingers follow at residues Tyr-167–His-189, His-202–His-224, Phe-230–His-252, Tyr-258–His-280, His-286–His-308, Phe-314–His-336, Tyr-342–His-364, His-370–His-392, and Ala-398–His-420.

This sequence belongs to the krueppel C2H2-type zinc-finger protein family.

The protein resides in the nucleus. Its function is as follows. May be involved in transcriptional regulation. This Mus musculus (Mouse) protein is Zinc finger protein 672 (Znf672).